Reading from the N-terminus, the 367-residue chain is Queuine tRNA-ribosyltransferase (367 aa).

The Proton acceptor role is filled by aspartate 92. Substrate-binding positions include 92–96 (DSGGF), aspartate 146, glutamine 188, and glycine 215. The RNA binding stretch occupies residues 246–252 (GVGTPKD). The Nucleophile role is filled by aspartate 265. The Zn(2+) site is built by cysteine 303, cysteine 305, cysteine 308, and histidine 334.

It belongs to the queuine tRNA-ribosyltransferase family. As to quaternary structure, homodimer. Within each dimer, one monomer is responsible for RNA recognition and catalysis, while the other monomer binds to the replacement base PreQ1. Requires Zn(2+) as cofactor.

The catalysed reaction is 7-aminomethyl-7-carbaguanine + guanosine(34) in tRNA = 7-aminomethyl-7-carbaguanosine(34) in tRNA + guanine. It functions in the pathway tRNA modification; tRNA-queuosine biosynthesis. Functionally, catalyzes the base-exchange of a guanine (G) residue with the queuine precursor 7-aminomethyl-7-deazaguanine (PreQ1) at position 34 (anticodon wobble position) in tRNAs with GU(N) anticodons (tRNA-Asp, -Asn, -His and -Tyr). Catalysis occurs through a double-displacement mechanism. The nucleophile active site attacks the C1' of nucleotide 34 to detach the guanine base from the RNA, forming a covalent enzyme-RNA intermediate. The proton acceptor active site deprotonates the incoming PreQ1, allowing a nucleophilic attack on the C1' of the ribose to form the product. After dissociation, two additional enzymatic reactions on the tRNA convert PreQ1 to queuine (Q), resulting in the hypermodified nucleoside queuosine (7-(((4,5-cis-dihydroxy-2-cyclopenten-1-yl)amino)methyl)-7-deazaguanosine). This Francisella tularensis subsp. holarctica (strain FTNF002-00 / FTA) protein is Queuine tRNA-ribosyltransferase.